We begin with the raw amino-acid sequence, 404 residues long: Phosphopentomutase (404 aa).

Mn(2+) is bound by residues Asp10, Asp303, His308, Asp344, His345, and His356.

Belongs to the phosphopentomutase family. Mn(2+) is required as a cofactor.

Its subcellular location is the cytoplasm. It carries out the reaction 2-deoxy-alpha-D-ribose 1-phosphate = 2-deoxy-D-ribose 5-phosphate. The enzyme catalyses alpha-D-ribose 1-phosphate = D-ribose 5-phosphate. The protein operates within carbohydrate degradation; 2-deoxy-D-ribose 1-phosphate degradation; D-glyceraldehyde 3-phosphate and acetaldehyde from 2-deoxy-alpha-D-ribose 1-phosphate: step 1/2. Isomerase that catalyzes the conversion of deoxy-ribose 1-phosphate (dRib-1-P) and ribose 1-phosphate (Rib-1-P) to deoxy-ribose 5-phosphate (dRib-5-P) and ribose 5-phosphate (Rib-5-P), respectively. In Shewanella sp. (strain ANA-3), this protein is Phosphopentomutase.